The following is a 219-amino-acid chain: MPALDLIRPSVTAMRVIASVNADFARELKLPPHIRSLGLISADSDDVTYIAADEATKQAMVEVVYGRSLYAGAAHGPSPTAGEVLIMLGGPNPAEVRAGLDAMIAHIENGAAFQWANDAQDTAFLAHVVSRTGSYLSSTAGITLGDPMAYLVAPPLEATYGIDAALKSADVQLATYVPPPSETNYSAAFLTGSQAACKAACNAFTDAVLEIARNPIQRA.

BMC circularly permuted domains lie at 1–113 and 114–215; these read MPAL…GAAF and QWAN…ARNP. Residues Asp45, Asp46, Glu83, and Phe113 each coordinate ethanolamine. The tract at residues 45 to 46 is part of the acidic patch lining the small pore; that stretch reads DD. Glu157 provides a ligand contact to Zn(2+). An ethanolamine-binding site is contributed by 183-185; the sequence is TNY.

It belongs to the EutL/PduB family. In terms of assembly, homotrimerizes to form a pseudohexamer. The trimers form a two-dimensional array about 37 Angstroms thick.

The protein localises to the bacterial microcompartment. It participates in amine and polyamine degradation; ethanolamine degradation. Its function is as follows. A component of the bacterial microcompartment (BMC) shell dedicated to ethanolamine degradation. Two crystal forms have been seen; a form with a closed central pore that has 3 very small (1.1-2.2 Angstroms) channels per trimer lined by acidic and aromatic residues. A form with a large central pore (8-12 Angstroms) has also been seen; this is probably a functional pore which allows molecules to enter and exit the BMC in a selective, gated manner. Another group only sees the central pore in the presence of Zn(2+); soaking crystals in ZnCl(2) leads to dramatic conformational changes that open a central pore of about 12 Angstroms. Whether Zn(2+) binding is physiologically relevant is unclear, however it suggests a gating mechanism exists. Ethanolamine-binding by the small channels has been hypothesized to stabilize the EutL central pore in a closed (non-transporting) state. An open pore is thought to be large enough to transport ATP and/or cobalamin. The sequence is that of Bacterial microcompartment shell protein EutL (eutL) from Escherichia coli (strain K12).